The primary structure comprises 549 residues: Arginine--tRNA ligase (549 aa).

The short motif at 113–123 (ANPDGPLHIGH) is the 'HIGH' region element.

This sequence belongs to the class-I aminoacyl-tRNA synthetase family.

The protein localises to the cytoplasm. It catalyses the reaction tRNA(Arg) + L-arginine + ATP = L-arginyl-tRNA(Arg) + AMP + diphosphate. This Archaeoglobus fulgidus (strain ATCC 49558 / DSM 4304 / JCM 9628 / NBRC 100126 / VC-16) protein is Arginine--tRNA ligase (argS).